We begin with the raw amino-acid sequence, 234 residues long: Ribonuclease 3 (234 aa).

Residues 13 to 136 enclose the RNase III domain; the sequence is YITLEKALGY…LMAGVYLEAG (124 aa). Glutamate 49 lines the Mg(2+) pocket. Aspartate 53 is a catalytic residue. Serine 122 and glutamate 125 together coordinate Mg(2+). The active site involves glutamate 125. Residues 163 to 232 form the DRBM domain; the sequence is DYKTALQELT…AYQALQKLKG (70 aa).

This sequence belongs to the ribonuclease III family. Homodimer. Mg(2+) serves as cofactor.

It is found in the cytoplasm. It carries out the reaction Endonucleolytic cleavage to 5'-phosphomonoester.. In terms of biological role, digests double-stranded RNA. Involved in the processing of primary rRNA transcript to yield the immediate precursors to the large and small rRNAs (23S and 16S). Processes some mRNAs, and tRNAs when they are encoded in the rRNA operon. Processes pre-crRNA and tracrRNA of type II CRISPR loci if present in the organism. This Helicobacter acinonychis (strain Sheeba) protein is Ribonuclease 3.